A 153-amino-acid chain; its full sequence is Probable disulfide formation protein (153 aa).

A helical membrane pass occupies residues 4–23 (DTRLYLAWLVALAATLGSLY). Cys-33 and Cys-36 are joined by a disulfide. 2 helical membrane passes run 38-57 (AQRI…AFVG) and 64-81 (YVLP…FQNL). A disulfide bond links Cys-93 and Cys-101. A helical transmembrane segment spans residues 117-139 (RALTIPVLSMIAFALILALLSWP).

The protein belongs to the DsbB family. BdbC subfamily.

The protein resides in the cell membrane. Functionally, required for disulfide bond formation in some proteins. This Deinococcus radiodurans (strain ATCC 13939 / DSM 20539 / JCM 16871 / CCUG 27074 / LMG 4051 / NBRC 15346 / NCIMB 9279 / VKM B-1422 / R1) protein is Probable disulfide formation protein.